A 560-amino-acid polypeptide reads, in one-letter code: MGFIVGVVIGLLVGIAIIIGFVKLENSRSKLRSELANTVAAFARMTVEDSRKLLPPEFYPSWVVFSERQKLTWLNHHLTKIWPYVDEAASELIKASVEPVLEQYRPAIVASLTFSKLTLGTVAPQFTGVSVIDGDKNGITLELDMQWDGNPNIVLGVKTLVGVSLPIQVKNIGFTGVFRLIFRPLVEDFPCFGAVSVSLREKKKLDFTLKVVGGDISAIPGLSEAIEETIRDAVEDSITWPVRKVIPIIPGDYSDLELKPVGMLEVKLVQAKNLTNKDLVGKSDPFAKMFIRPLREKTKRSKTINNDLNPIWNEHFEFVVEDASTQHLVVRIYDDEGVQASELIGCAQIRLCELEPGKVKDVWLKLVKDLEIQRDTKNRGEVHLELLYIPYGSGNGIVNPFVTSSMTSLERVLKNDTTDEENASSRKRKDVIVRGVLSVTVISAEEIPIQDLMGKADPYVVLSMKKSGAKSKTRVVNDSLNPVWNQTFDFVVEDGLHDMLVLEVWDHDTFGKDYIGRCILTLTRVIMEEEYKDWYPLDESKTGKLQLHLKWMAQSIYRDS.

A helical membrane pass occupies residues 2–22 (GFIVGVVIGLLVGIAIIIGFV). In terms of domain architecture, SMP-LTD spans 67–249 (ERQKLTWLNH…WPVRKVIPII (183 aa)). Positions 227-523 (EETIRDAVED…YIGRCILTLT (297 aa)) are phospholipid binding. C2 domains follow at residues 243 to 364 (RKVI…DVWL) and 417 to 535 (TTDE…KDWY). Residues D278, D284, D334, E336, D451, D457, D506, D508, and D513 each contribute to the Ca(2+) site.

The protein belongs to the synaptotagmin family. Ca(2+) serves as cofactor.

It is found in the membrane. Functionally, may be involved in membrane trafficking. The protein is Synaptotagmin-5 (SYT5) of Arabidopsis thaliana (Mouse-ear cress).